A 343-amino-acid chain; its full sequence is tRNA N6-adenosine threonylcarbamoyltransferase (343 aa).

Fe cation contacts are provided by His120 and His124. Residues Val142–Gly146, Asp175, Gly188, Asp192, and Asn281 each bind substrate. Residue Asp310 participates in Fe cation binding.

The protein belongs to the KAE1 / TsaD family. The cofactor is Fe(2+).

It localises to the cytoplasm. The catalysed reaction is L-threonylcarbamoyladenylate + adenosine(37) in tRNA = N(6)-L-threonylcarbamoyladenosine(37) in tRNA + AMP + H(+). Functionally, required for the formation of a threonylcarbamoyl group on adenosine at position 37 (t(6)A37) in tRNAs that read codons beginning with adenine. Is involved in the transfer of the threonylcarbamoyl moiety of threonylcarbamoyl-AMP (TC-AMP) to the N6 group of A37, together with TsaE and TsaB. TsaD likely plays a direct catalytic role in this reaction. This chain is tRNA N6-adenosine threonylcarbamoyltransferase, found in Bacillus anthracis.